We begin with the raw amino-acid sequence, 179 residues long: ATP synthase subunit delta (179 aa).

Belongs to the ATPase delta chain family. F-type ATPases have 2 components, F(1) - the catalytic core - and F(0) - the membrane proton channel. F(1) has five subunits: alpha(3), beta(3), gamma(1), delta(1), epsilon(1). F(0) has three main subunits: a(1), b(2) and c(10-14). The alpha and beta chains form an alternating ring which encloses part of the gamma chain. F(1) is attached to F(0) by a central stalk formed by the gamma and epsilon chains, while a peripheral stalk is formed by the delta and b chains.

It localises to the cell membrane. In terms of biological role, f(1)F(0) ATP synthase produces ATP from ADP in the presence of a proton or sodium gradient. F-type ATPases consist of two structural domains, F(1) containing the extramembraneous catalytic core and F(0) containing the membrane proton channel, linked together by a central stalk and a peripheral stalk. During catalysis, ATP synthesis in the catalytic domain of F(1) is coupled via a rotary mechanism of the central stalk subunits to proton translocation. This protein is part of the stalk that links CF(0) to CF(1). It either transmits conformational changes from CF(0) to CF(1) or is implicated in proton conduction. The polypeptide is ATP synthase subunit delta (Clostridium botulinum (strain Kyoto / Type A2)).